The primary structure comprises 371 residues: tRNA-specific 2-thiouridylase MnmA (371 aa).

Residues 16 to 23 and methionine 42 each bind ATP; that span reads GMSGGVDS. An interaction with target base in tRNA region spans residues 102–104; it reads NPD. The active-site Nucleophile is the cysteine 107. Cysteine 107 and cysteine 204 form a disulfide bridge. Residue glycine 132 coordinates ATP. The segment at 154–156 is interaction with tRNA; sequence KDQ. The active-site Cysteine persulfide intermediate is the cysteine 204. An interaction with tRNA region spans residues 316–317; the sequence is RY.

This sequence belongs to the MnmA/TRMU family.

It is found in the cytoplasm. It carries out the reaction S-sulfanyl-L-cysteinyl-[protein] + uridine(34) in tRNA + AH2 + ATP = 2-thiouridine(34) in tRNA + L-cysteinyl-[protein] + A + AMP + diphosphate + H(+). Its function is as follows. Catalyzes the 2-thiolation of uridine at the wobble position (U34) of tRNA, leading to the formation of s(2)U34. This Shewanella halifaxensis (strain HAW-EB4) protein is tRNA-specific 2-thiouridylase MnmA.